The primary structure comprises 76 residues: MLKELINKLLWHPDYNPEDYNITYLHRGAKNDEKAVPLKNIVIEDSFLVFDETHVPFHRILEIVNLKTGEILYKKR.

It belongs to the UPF0248 family.

This Methanococcus maripaludis (strain C7 / ATCC BAA-1331) protein is UPF0248 protein MmarC7_1289.